Consider the following 331-residue polypeptide: Probable 5-dehydro-4-deoxyglucarate dehydratase 2 (331 aa).

The segment at 1–23 (MSADTDTDTDTGTGTGPDTDTGT) is disordered. Low complexity predominate over residues 10-23 (DTGTGTGPDTDTGT).

It belongs to the DapA family.

The catalysed reaction is 5-dehydro-4-deoxy-D-glucarate + H(+) = 2,5-dioxopentanoate + CO2 + H2O. It functions in the pathway carbohydrate acid metabolism; D-glucarate degradation; 2,5-dioxopentanoate from D-glucarate: step 2/2. This is Probable 5-dehydro-4-deoxyglucarate dehydratase 2 from Streptomyces avermitilis (strain ATCC 31267 / DSM 46492 / JCM 5070 / NBRC 14893 / NCIMB 12804 / NRRL 8165 / MA-4680).